Here is a 279-residue protein sequence, read N- to C-terminus: Epidermal growth factor-like protein 7 (279 aa).

A signal peptide spans 1 to 21 (MWGSGELLVAWFLVLAAGGTT). Residues 28–109 (SRRVCTVGVS…TNGLPGACGA (82 aa)) form the EMI domain. Cystine bridges form between cysteine 32–cysteine 94, cysteine 57–cysteine 63, cysteine 93–cysteine 107, cysteine 112–cysteine 122, cysteine 116–cysteine 128, cysteine 130–cysteine 139, cysteine 146–cysteine 157, cysteine 153–cysteine 166, and cysteine 168–cysteine 181. The region spanning 108–140 (GAAICQPPCGNEGSCIRPGRCRCPVGWQGDTCQ) is the EGF-like 1 domain. The Cell attachment site motif lies at 131 to 133 (PVG). The 41-residue stretch at 142–182 (DVDECSTGEARCPQRCVNTVGSYWCQCWEGQSPSADGVLCL) folds into the EGF-like 2; calcium-binding domain. Coiled coils occupy residues 200 to 224 (SVVREEVYKLQARVDVLEQKLQLVL) and 250 to 274 (FQQLDRIDSLSEQVSFLEEQLGSCS).

As to quaternary structure, interacts with ITGAV/ITGB3 in an RGD-dependent manner, increasing endothelial cell's motility.

Its subcellular location is the secreted. The protein localises to the extracellular space. In terms of biological role, regulates vascular tubulogenesis in vivo. Inhibits platelet-derived growth factor (PDGF)-BB-induced smooth muscle cell migration and promotes endothelial cell adhesion to the extracellular matrix and angiogenesis. This is Epidermal growth factor-like protein 7 (Egfl7) from Rattus norvegicus (Rat).